The sequence spans 445 residues: Exodeoxyribonuclease 7 large subunit (445 aa).

The protein belongs to the XseA family. In terms of assembly, heterooligomer composed of large and small subunits.

Its subcellular location is the cytoplasm. The enzyme catalyses Exonucleolytic cleavage in either 5'- to 3'- or 3'- to 5'-direction to yield nucleoside 5'-phosphates.. Functionally, bidirectionally degrades single-stranded DNA into large acid-insoluble oligonucleotides, which are then degraded further into small acid-soluble oligonucleotides. In Xanthomonas oryzae pv. oryzae (strain PXO99A), this protein is Exodeoxyribonuclease 7 large subunit.